Here is a 538-residue protein sequence, read N- to C-terminus: MAVSSKHIPAPDLHRVRRALLSVSDKTGLIDFAKALHANGVEILSTGGTAKSIAAAGIPVKDVSEITGFPEIMDGRVKTLHPAVHGGLLAVRNDPEHVAAMEEHGIGGIDLAVINLYPFEEVRFKGGDYDTTVENIDIGGPAMIRASAKNHAYVATVVDPADYADVVAELEKHSGSLPLAFRKKLAAKAFSRTAAYDAAISNWFAEAIDEETPTYRAAAGKLHSVMRYGENPHQTAGFYLTGEKRPGVATATQLQGKQLSYNNINDTDAAFELVAEFDPARTAAVAIIKHANPCGVAEASTIKEAYLKALACDPVSAFGGIVALNRTLDEEAAEEIVKTFTEVIIAPDATEGAQAIVAAKKNLRLLVTGGLPDPRAKGIAAKTVAGGLLVQSRDNGVVDDLDLKVVTKRAPTEAELNDLKFAFRVGKHVKSNAIVYVKDGATVGIGAGQMSRVDSARIAARKAEDAAEAAGLAAPLTKGCVVASDAFFPFADGLLSAVEAGATAVIQPGGSMRDDEVIAAADEHGIAMVMTGMRHFRH.

Residues 6-158 enclose the MGS-like domain; sequence KHIPAPDLHR…KNHAYVATVV (153 aa).

It belongs to the PurH family.

It catalyses the reaction (6R)-10-formyltetrahydrofolate + 5-amino-1-(5-phospho-beta-D-ribosyl)imidazole-4-carboxamide = 5-formamido-1-(5-phospho-D-ribosyl)imidazole-4-carboxamide + (6S)-5,6,7,8-tetrahydrofolate. The enzyme catalyses IMP + H2O = 5-formamido-1-(5-phospho-D-ribosyl)imidazole-4-carboxamide. It functions in the pathway purine metabolism; IMP biosynthesis via de novo pathway; 5-formamido-1-(5-phospho-D-ribosyl)imidazole-4-carboxamide from 5-amino-1-(5-phospho-D-ribosyl)imidazole-4-carboxamide (10-formyl THF route): step 1/1. It participates in purine metabolism; IMP biosynthesis via de novo pathway; IMP from 5-formamido-1-(5-phospho-D-ribosyl)imidazole-4-carboxamide: step 1/1. This is Bifunctional purine biosynthesis protein PurH from Brucella abortus (strain S19).